We begin with the raw amino-acid sequence, 616 residues long: Chaperone protein HscA (616 aa).

The protein belongs to the heat shock protein 70 family.

Functionally, chaperone involved in the maturation of iron-sulfur cluster-containing proteins. Has a low intrinsic ATPase activity which is markedly stimulated by HscB. Involved in the maturation of IscU. The sequence is that of Chaperone protein HscA from Citrobacter koseri (strain ATCC BAA-895 / CDC 4225-83 / SGSC4696).